Consider the following 44-residue polypeptide: Omega-plectoxin-Pt1a (44 aa).

Intrachain disulfides connect Cys3-Cys17, Cys10-Cys23, Cys16-Cys35, Cys20-Cys42, and Cys25-Cys33. Thr44 is modified (threonine amide). Thr44 carries O-palmitoyl threonine lipidation.

This sequence belongs to the neurotoxin 02 (plectoxin) family. 02 (plectoxin) subfamily. Contains 5 disulfide bonds. In terms of processing, acylation by palmitate is required for biological activity. In terms of tissue distribution, expressed by the venom gland.

The protein localises to the secreted. Toxin that inhibits presynaptic voltage-gated calcium channel (Cav) in Drosophila nerve terminals, most likely through specific block of the Cav2 channel (known as Dmca1A). The sequence is that of Omega-plectoxin-Pt1a from Plectreurys tristis (Spider).